We begin with the raw amino-acid sequence, 547 residues long: Delta-guaiene synthase 1 (547 aa).

3 residues coordinate Mg(2+): Asp-299, Asp-303, and Asp-444. The DDXXD motif signature appears at 299–303; that stretch reads DDTYD.

It belongs to the terpene synthase family. The cofactor is Mg(2+).

It catalyses the reaction (2E,6E)-farnesyl diphosphate = delta-guaiene + diphosphate. The enzyme catalyses (2E,6E)-farnesyl diphosphate = alpha-guaiene + diphosphate. It functions in the pathway secondary metabolite biosynthesis; terpenoid biosynthesis. Functionally, sesquiterpene synthase involved in the biosynthesis of delta-guaiene (81.2%) and alpha-guaiene (18.1%), two structures composed of five- and seven-membered rings. Also produces 0.7% of alpha-humulene. The sequence is that of Delta-guaiene synthase 1 (C2) from Aquilaria crassna (Eagle wood).